A 481-amino-acid chain; its full sequence is Histidine--tRNA ligase, cytoplasmic (481 aa).

The segment at 1–48 (MSEPVVDNVTNKVEKMEVKEKTSAPPKEKKEKKSNKVQLKTPKGTQDY) is disordered. Positions 12–31 (KVEKMEVKEKTSAPPKEKKE) are enriched in basic and acidic residues.

The protein belongs to the class-II aminoacyl-tRNA synthetase family.

Its subcellular location is the cytoplasm. The enzyme catalyses tRNA(His) + L-histidine + ATP = L-histidyl-tRNA(His) + AMP + diphosphate + H(+). The chain is Histidine--tRNA ligase, cytoplasmic (hisS) from Dictyostelium discoideum (Social amoeba).